The following is a 1456-amino-acid chain: Macrophage mannose receptor 1 (1456 aa).

The N-terminal stretch at Met1 to Leu19 is a signal peptide. The Extracellular segment spans residues Leu20–Ala1388. The region spanning Ala22 to Tyr142 is the Ricin B-type lectin domain. Intrachain disulfides connect Cys35-Cys49, Cys74-Cys91, Cys102-Cys149, Cys168-Cys194, Cys182-Cys209, Cys247-Cys340, and Cys316-Cys332. A glycan (N-linked (GlcNAc...) asparagine) is linked at Asn104. In terms of domain architecture, Fibronectin type-II spans Ala163–Leu211. The C-type lectin 1 domain occupies Leu225 to Lys341. The N-linked (GlcNAc...) asparagine glycan is linked to Asn344. C-type lectin domains lie at Tyr369–Lys487, His511–Lys626, Lys655–Gln778, and Tyr807–Gln923. 2 disulfide bridges follow: Cys391–Cys486 and Cys463–Cys478. Residue Asn529 is glycosylated (N-linked (GlcNAc...) asparagine). 6 cysteine pairs are disulfide-bonded: Cys532-Cys625, Cys600-Cys617, Cys680-Cys777, Cys753-Cys769, Cys828-Cys922, and Cys899-Cys914. Residues Asn926 and Asn930 are each glycosylated (N-linked (GlcNAc...) asparagine). C-type lectin domains lie at Tyr951–Gln1079, Tyr1101–Lys1212, and Phe1240–Lys1355. 6 cysteine pairs are disulfide-bonded: Cys976–Cys1078, Cys1051–Cys1070, Cys1122–Cys1211, Cys1189–Cys1203, Cys1262–Cys1354, and Cys1331–Cys1346. Asn1159 carries an N-linked (GlcNAc...) asparagine glycan. Residue Asn1204 is glycosylated (N-linked (GlcNAc...) asparagine). The chain crosses the membrane as a helical span at residues Ala1389–Phe1409. Residues Tyr1410–Ile1456 are Cytoplasmic-facing.

In terms of tissue distribution, detected in macrophages.

Its subcellular location is the endosome membrane. The protein resides in the cell membrane. In terms of biological role, mediates the endocytosis of glycoproteins by macrophages. Binds both sulfated and non-sulfated polysaccharide chains. Acts as phagocytic receptor for bacteria, fungi and other pathogens. In Mus musculus (Mouse), this protein is Macrophage mannose receptor 1 (Mrc1).